Here is a 162-residue protein sequence, read N- to C-terminus: Protein NrdI (162 aa).

This sequence belongs to the NrdI family.

In terms of biological role, probably involved in ribonucleotide reductase function. This is Protein NrdI from Streptococcus pyogenes serotype M3 (strain ATCC BAA-595 / MGAS315).